Consider the following 634-residue polypeptide: E3 ubiquitin/ISG15 ligase TRIM25 (634 aa).

An RING-type zinc finger spans residues 13–54 (CSVCLELFKEPVTTPCGHNFCMSCLDETWVVQGPPYRCPQCR). At T90 the chain carries Phosphothreonine. S99 bears the Phosphoserine mark. Residue K116 forms a Glycyl lysine isopeptide (Lys-Gly) (interchain with G-Cter in ISG15) linkage. Positions 215–305 (ATKALEDVRS…LIMDKGDEFE (91 aa)) form a coiled coil. An N6-acetyllysine modification is found at K272. A Phosphotyrosine modification is found at Y277. The disordered stretch occupies residues 353–437 (KLQKKSEEHN…APKASAAQPD (85 aa)). The span at 363 to 376 (GSGNKGDQTQSTFK) shows a compositional bias: polar residues. In terms of domain architecture, B30.2/SPRY spans 444–634 (KVLENFLTKS…AGTTLSICSK (191 aa)). K572 carries the N6-acetyllysine modification.

In terms of assembly, forms homodimers. Interacts (via SPRY domain) with RIGI (via CARD domain). Interacts with ZFHX3. Interacts with NLRP12; this interaction reduces the E3 ubiquitin ligase TRIM25-mediated 'Lys-63'-linked RIGI activation. Interacts with the KHDC3L/FILIA-OOEP/FLOPED scaffold complex and BLM at DNA replication forks. Interacts with RTN3; this interaction prevents RIGI ubiquitination. Interacts with YWHAE. Auto-ISGylated. Ubiquitous.

The protein localises to the cytoplasm. It is found in the stress granule. Its subcellular location is the nucleus. It carries out the reaction S-ubiquitinyl-[E2 ubiquitin-conjugating enzyme]-L-cysteine + [acceptor protein]-L-lysine = [E2 ubiquitin-conjugating enzyme]-L-cysteine + N(6)-ubiquitinyl-[acceptor protein]-L-lysine.. It catalyses the reaction ATP + [ISG15] + [protein]-lysine = AMP + diphosphate + [protein]-N-ISGyllysine.. Its pathway is protein modification; protein ubiquitination. Functionally, functions as a ubiquitin E3 ligase and as an ISG15 E3 ligase. Involved in innate immune defense against viruses by mediating ubiquitination of RIGI and IFIH1. Mediates 'Lys-63'-linked polyubiquitination of the RIGI N-terminal CARD-like region and may play a role in signal transduction that leads to the production of interferons in response to viral infection. Mediates 'Lys-63'-linked polyubiquitination of IFIH1. Promotes ISGylation of 14-3-3 sigma (SFN), an adapter protein implicated in the regulation of a large spectrum signaling pathway. Mediates estrogen action in various target organs. Mediates the ubiquitination and subsequent proteasomal degradation of ZFHX3. Plays a role in promoting the restart of stalled replication forks via interaction with the KHDC3L-OOEP scaffold and subsequent ubiquitination of BLM, resulting in the recruitment and retainment of BLM at DNA replication forks. Plays an essential role in the antiviral activity of ZAP/ZC3HAV1; an antiviral protein which inhibits the replication of certain viruses. Mechanistically, mediates 'Lys-63'-linked polyubiquitination of ZAP/ZC3HAV1 that is required for its optimal binding to target mRNA. Also mediates the ubiquitination of various substrates implicated in stress granule formation, nonsense-mediated mRNA decay, nucleoside synthesis and mRNA translation and stability. This is E3 ubiquitin/ISG15 ligase TRIM25 (Trim25) from Mus musculus (Mouse).